Consider the following 443-residue polypeptide: Putative transporter AmpG 1 (443 aa).

13 helical membrane-spanning segments follow: residues 5-25 (SHIY…MITG), 42-62 (IGML…APVF), 78-98 (LSWI…LSFL), 104-124 (LVLL…QDTI), 143-163 (GIYI…AIYL), 171-191 (AIYK…ILVA), 230-250 (FNYF…GFYF), 254-274 (DINL…YRLP), 299-319 (VCKF…GIIM), 324-344 (ILYS…FFIL), 354-374 (ILFI…TAYI), 393-413 (LSSM…YMVV), and 415-435 (FGWQ…LLIL).

The protein belongs to the major facilitator superfamily.

The protein resides in the cell inner membrane. The sequence is that of Putative transporter AmpG 1 (ampG1) from Rickettsia prowazekii (strain Madrid E).